The sequence spans 238 residues: uncharacterized protein (238 aa).

This is an uncharacterized protein from Escherichia coli (strain K12).